The sequence spans 178 residues: Cytochrome b6-f complex iron-sulfur subunit (178 aa).

The helical transmembrane segment at 20-42 (LLTFGSVTGVALGALYPVVNYFI) threads the bilayer. Residues 65–161 (ASGWLADHKE…VNVENDNVFV (97 aa)) enclose the Rieske domain. C107, H109, C125, and H128 together coordinate [2Fe-2S] cluster. C112 and C127 are oxidised to a cystine.

The protein belongs to the Rieske iron-sulfur protein family. The 4 large subunits of the cytochrome b6-f complex are cytochrome b6, subunit IV (17 kDa polypeptide, PetD), cytochrome f and the Rieske protein, while the 4 small subunits are PetG, PetL, PetM and PetN. The complex functions as a dimer. It depends on [2Fe-2S] cluster as a cofactor.

The protein resides in the cellular thylakoid membrane. It catalyses the reaction 2 oxidized [plastocyanin] + a plastoquinol + 2 H(+)(in) = 2 reduced [plastocyanin] + a plastoquinone + 4 H(+)(out). Component of the cytochrome b6-f complex, which mediates electron transfer between photosystem II (PSII) and photosystem I (PSI), cyclic electron flow around PSI, and state transitions. The polypeptide is Cytochrome b6-f complex iron-sulfur subunit (Synechococcus sp. (strain RCC307)).